The sequence spans 648 residues: RAF proto-oncogene serine/threonine-protein kinase (648 aa).

A Phosphoserine; by MAPK1 modification is found at serine 29. The residue at position 43 (serine 43) is a Phosphoserine. The 76-residue stretch at 56–131 folds into the RBD domain; the sequence is NTIRVFLPNK…IGEELQVDFL (76 aa). The Phorbol-ester/DAG-type zinc-finger motif lies at 138 to 184; sequence THNFARKTFLKLAFCDICQKFLLNGFRCQTCGYKFHEHCSTKVPTMC. Zn(2+) contacts are provided by histidine 139, cysteine 152, cysteine 155, cysteine 165, cysteine 168, histidine 173, cysteine 176, and cysteine 184. The tract at residues 217 to 335 is disordered; that stretch reads MRESVSRMPA…EKNKIRPRGQ (119 aa). Position 233 is a phosphoserine; by PKA (serine 233). Over residues 239 to 271 the composition is skewed to polar residues; that stretch reads TFNTSSPSSEGSLSQRQRSTSTPNVHMVSTTLP. Phosphoserine occurs at positions 252 and 259. A Phosphothreonine; by autocatalysis modification is found at threonine 268. Threonine 269 bears the Phosphothreonine; by PKA mark. The span at 275-285 shows a compositional bias: basic and acidic residues; the sequence is RMIEDAIRSHS. Over residues 286–301 the composition is skewed to low complexity; it reads ESASPSALSSSPNNLS. Phosphoserine; by MAPK1 occurs at positions 289, 296, and 301. The interval 331 to 349 is interaction with PEBP1/RKIP; that stretch reads RPRGQRDSSYYWEIEASEV. At serine 338 the chain carries Phosphoserine; by PAK1, PAK2, PAK3 and PAK5. At serine 339 the chain carries Phosphoserine; by PAK1, PAK2 and PAK3. Phosphotyrosine; by SRC is present on residues tyrosine 340 and tyrosine 341. In terms of domain architecture, Protein kinase spans 349–609; sequence VMLSTRIGSG…PQILSSIELL (261 aa). Residues 355–363 and lysine 375 each bind ATP; that span reads IGSGSFGTV. Catalysis depends on aspartate 468, which acts as the Proton acceptor. A Phosphoserine modification is found at serine 471. The residue at position 491 (threonine 491) is a Phosphothreonine. At serine 494 the chain carries Phosphoserine. Phosphoserine; by PKC is present on residues serine 497 and serine 499. Position 563 is a symmetric dimethylarginine; by PRMT5 (arginine 563). Serine 621 is subject to Phosphoserine. Serine 642 is subject to Phosphoserine; by MAPK1.

Belongs to the protein kinase superfamily. TKL Ser/Thr protein kinase family. RAF subfamily. Monomer. Homodimer. Heterodimerizes with BRAF and this heterodimer possesses a highly increased kinase activity compared to the respective homodimers or monomers. Heterodimerization is mitogen-regulated and enhanced by 14-3-3 proteins. MAPK1/ERK2 activation can induce a negative feedback that promotes the dissociation of the heterodimer. Forms a multiprotein complex with Ras (M-Ras/MRAS), SHOC2 and protein phosphatase 1 (PPP1CA, PPP1CB and PPP1CC). Interacts with LZTR1. Interacts with Ras proteins; the interaction is antagonized by RIN1. Weakly interacts with RIT1. Interacts with STK3/MST2; the interaction inhibits its pro-apoptotic activity. Interacts (when phosphorylated at Ser-259) with YWHAZ (unphosphorylated at 'Thr-232'). Interacts with MAP3K5/ASF1 (via N-terminus) and this interaction inhibits the proapoptotic function of MAP3K5/ASK1. Interacts with PAK1 (via kinase domain). The phosphorylated form interacts with PIN1. The Ser-338 and Ser-339 phosphorylated form (by PAK1) interacts with BCL2. Interacts with PEBP1/RKIP and this interaction is enhanced if RAF1 is phosphorylated on residues Ser-338, Ser-339, Tyr-340 and Tyr-341. Interacts with ADCY2, ADCY5, ADCY6, DGKH, RCAN1/DSCR1, PPP1R12A, PKB/AKT1, PPP2CA, PPP2R1B, SPRY2, SPRY4, CNKSR1/CNK1, KSR2 and PHB/prohibitin. Interacts with ROCK2. Interacts (via N-terminus) with RGS14 (via RBD domains); the interaction mediates the formation of a ternary complex with BRAF, a ternary complex inhibited by GNAI1. Probably forms a complex composed of chaperones HSP90 and HSP70, co-chaperones CDC37, PPP5C, TSC1 and client protein TSC2, CDK4, AKT, RAF1 and NR3C1; this complex does not contain co-chaperones STIP1/HOP and PTGES3/p23. Interacts with MAP2K1/MEK1 and MAP2K2/MEK2. In its active form, interacts with PRMT5. Interacts with FAM83B; displaces 14-3-3 proteins from RAF1 and activates RAF1. Interacts with PDE8A; the interaction promotes RAF1 activity. Interacts with MFHAS1. Interacts with GLS. Interacts with YWHAZ. Interacts with NEK10 and MAP2K1; the interaction is direct with NEK10 and required for ERK1/2-signaling pathway activation in response to UV irradiation. Zn(2+) is required as a cofactor. Phosphorylation at Thr-269, Ser-338, Tyr-341, Thr-491 and Ser-494 results in its activation. Phosphorylation at Ser-29, Ser-43, Ser-289, Ser-296, Ser-301 and Ser-642 by MAPK1/ERK2 results in its inactivation. Phosphorylation at Ser-259 induces the interaction with YWHAZ and inactivates kinase activity. Dephosphorylation of Ser-259 by the SHOC2-MRAS-PP1c (SMP) complex consisting of SHOC2, GTP-bound M-Ras/MRAS and the catalytic subunit of protein phosphatase 1 (PPP1CA, PPP1CB or PPP1CC); this relieves inactivation and stimulates kinase activity. Phosphorylation at Ser-338 by PAK1 and PAK5 and Ser-339 by PAK1 is required for its mitochondrial localization. Phosphorylation at Ser-621 in response to growth factor treatment stabilizes the protein, possibly by preventing proteasomal degradation. Phosphorylation at Ser-289, Ser-296, Ser-301, Ser-338 and Ser-621 are somehow linked to the methylation potential of cells. Treatment of cells with HGF in the presence of the methylation inhibitor 5'-methylthioadenosine (MTA) results in increased phosphorylation at Ser-338 and Ser-621 and decreased phosphorylation at Ser-296, Ser-301 and Ser-338. Dephosphorylation at Ser-338 by PPP5C results in a decreased of activity. In terms of processing, methylated in response to EGF treatment. This modification leads to destabilization of the protein, possibly through proteasomal degradation.

It is found in the cytoplasm. Its subcellular location is the cell membrane. It localises to the mitochondrion. The protein resides in the nucleus. The enzyme catalyses L-seryl-[protein] + ATP = O-phospho-L-seryl-[protein] + ADP + H(+). It carries out the reaction L-threonyl-[protein] + ATP = O-phospho-L-threonyl-[protein] + ADP + H(+). With respect to regulation, regulation is a highly complex process involving membrane recruitment, protein-protein interactions, dimerization, and phosphorylation/dephosphorylation events. Ras-GTP recruits RAF1 to the membrane, thereby promoting its activation. The inactive conformation of RAF1 is maintained by autoinhibitory interactions occurring between the N-terminal regulatory and the C-terminal catalytic domains and by the binding of a 14-3-3 protein that contacts two phosphorylation sites, Ser-259 and Ser-621. Upon mitogenic stimulation, Ras and PPP2R1A cooperate to release autoinhibition and the subsequent phosphorylation of activating sites: Ser-338, Tyr-341, Thr-491, and Ser-494, yields a fully active kinase. Through a negative feedback mechanism involving MAPK1/ERK2, RAF1 is phosphorylated on Ser-29, Ser-43, Ser-289, Ser-296, Ser-301 and Ser-642 by MAPK1/ERK2, which yields an inactive, desensitized kinase. The signaling-competent conformation of RAF1 is finally re-established by the coordinated action of PIN1, a prolyl isomerase that converts pSer and pThr residues from the cis to the trans conformation, which is preferentially recognized and dephosphorylated by PPP2R1A. Activated by homodimerization and heterodimerization (with BRAF). Also regulated through association with other proteins such as KSR2, CNKSR1/CNK1, PEBP1/RKIP, PHB/prohibitin and SPRY4. PEBP1/RKIP acts by dissociating RAF1 from its substrates MAP2K1/MEK1 and MAP2K2/MEK2. PHB/prohibitin facilitates the displacement of 14-3-3 from RAF1 by activated Ras, thereby promoting cell membrane localization and phosphorylation of RAF1 at the activating Ser-338. SPRY4 inhibits Ras-independent, but not Ras-dependent, activation of RAF1. CNKSR1/CNK1 regulates Src-mediated RAF1 activation. Its function is as follows. Serine/threonine-protein kinase that acts as a regulatory link between the membrane-associated Ras GTPases and the MAPK/ERK cascade, and this critical regulatory link functions as a switch determining cell fate decisions including proliferation, differentiation, apoptosis, survival and oncogenic transformation. RAF1 activation initiates a mitogen-activated protein kinase (MAPK) cascade that comprises a sequential phosphorylation of the dual-specific MAPK kinases (MAP2K1/MEK1 and MAP2K2/MEK2) and the extracellular signal-regulated kinases (MAPK3/ERK1 and MAPK1/ERK2). The phosphorylated form of RAF1 (on residues Ser-338 and Ser-339, by PAK1) phosphorylates BAD/Bcl2-antagonist of cell death at 'Ser-75'. Phosphorylates adenylyl cyclases: ADCY2, ADCY5 and ADCY6, resulting in their activation. Phosphorylates PPP1R12A resulting in inhibition of the phosphatase activity. Can promote NF-kB activation and inhibit signal transducers involved in motility (ROCK2), apoptosis (MAP3K5/ASK1 and STK3/MST2), proliferation and angiogenesis (RB1). Can protect cells from apoptosis also by translocating to the mitochondria where it binds BCL2 and displaces BAD/Bcl2-antagonist of cell death. Regulates Rho signaling and migration, and is required for normal wound healing. Plays a role in the oncogenic transformation of epithelial cells via repression of the TJ protein, occludin (OCLN) by inducing the up-regulation of a transcriptional repressor SNAI2/SLUG, which induces down-regulation of OCLN. Restricts caspase activation in response to selected stimuli, notably Fas stimulation, pathogen-mediated macrophage apoptosis, and erythroid differentiation. Phosphorylates TNNT2/cardiac muscle troponin T. This is RAF proto-oncogene serine/threonine-protein kinase (Raf1) from Rattus norvegicus (Rat).